Here is a 569-residue protein sequence, read N- to C-terminus: Endonuclease/exonuclease/phosphatase family domain-containing protein 1 (569 aa).

Glycine 2 carries N-myristoyl glycine lipidation. Residues serine 16 and serine 25 each carry the phosphoserine modification. The 30-residue stretch at 38 to 67 folds into the HhH domain; it reads ERLNINTATEEELMTLPGVTRAVARSIVEY. Phosphoserine is present on residues serine 106, serine 110, serine 160, and serine 173. Residues 200 to 224 are disordered; sequence SRPPSTHTNGGLTFTAKPHPSPTSL. Over residues 202 to 211 the composition is skewed to polar residues; sequence PPSTHTNGGL. At threonine 265 the chain carries Phosphothreonine. The segment at 549 to 569 is disordered; sequence VPRNGNGVTLEPSEANIKHER.

The polypeptide is Endonuclease/exonuclease/phosphatase family domain-containing protein 1 (Eepd1) (Mus musculus (Mouse)).